The sequence spans 385 residues: S-adenosylmethionine synthase (385 aa).

Histidine 15 serves as a coordination point for ATP. Residue aspartate 17 participates in Mg(2+) binding. Glutamate 43 is a K(+) binding site. Glutamate 56 and glutamine 99 together coordinate L-methionine. The flexible loop stretch occupies residues 99–109; it reads QSVDIAQGVDR. Residues 164 to 166, 230 to 231, aspartate 239, 245 to 246, and lysine 266 contribute to the ATP site; these read DAK, RF, and RK. Residue aspartate 239 participates in L-methionine binding. Lysine 270 is an L-methionine binding site.

The protein belongs to the AdoMet synthase family. Homotetramer; dimer of dimers. Mg(2+) serves as cofactor. It depends on K(+) as a cofactor.

It is found in the cytoplasm. The enzyme catalyses L-methionine + ATP + H2O = S-adenosyl-L-methionine + phosphate + diphosphate. It functions in the pathway amino-acid biosynthesis; S-adenosyl-L-methionine biosynthesis; S-adenosyl-L-methionine from L-methionine: step 1/1. Its function is as follows. Catalyzes the formation of S-adenosylmethionine (AdoMet) from methionine and ATP. The overall synthetic reaction is composed of two sequential steps, AdoMet formation and the subsequent tripolyphosphate hydrolysis which occurs prior to release of AdoMet from the enzyme. This is S-adenosylmethionine synthase from Alkalilimnicola ehrlichii (strain ATCC BAA-1101 / DSM 17681 / MLHE-1).